The primary structure comprises 90 residues: uncharacterized protein (90 aa).

This is an uncharacterized protein from Clostridium acetobutylicum (strain ATCC 824 / DSM 792 / JCM 1419 / IAM 19013 / LMG 5710 / NBRC 13948 / NRRL B-527 / VKM B-1787 / 2291 / W).